The primary structure comprises 118 residues: Mating-type P-specific polypeptide Pc (118 aa).

The segment at residues 29–97 (KTTIYKNGFM…VRKQIAKLER (69 aa)) is a DNA-binding region (HMG box).

Its subcellular location is the nucleus. Functionally, mating type proteins are sequence specific DNA-binding proteins that act as master switches in yeast differentiation by controlling gene expression in a cell type-specific fashion. Required for conjugation and efficient meiosis. This Schizosaccharomyces kambucha (Fission yeast) protein is Mating-type P-specific polypeptide Pc (matPc).